Consider the following 421-residue polypeptide: MQIKTFALSAAIAQVATLALADTSANYWQSFTSQINPKNISIPSIEQTSSIDPTQECAYYTPDASLFTFNASEWPSIWEVATTNGMNESAEFLSVYNSIDWTKAPNISVRTLDANGNLDTTGYNTATDPDCWWTATTCTSPKISDINDDISKCPEPETWGLTYDDGPNCSHNAFYDYLQEQKLKASMFYIGSNVVDWPYGAMRGVVDGHHIASHTWSHPQMTTKTNQEVLAEFYYTQKAIKLATGLTPRYWRPPYGDIDDRVRWIASQLGLTAVIWNLDTDDWSAGVTTTVEAVEQSYSDYIAMGTNGTFANSGNIVLTHEINTTMSLAVENLPKIISAYKQVIDVATCYNISHPYFEDYEWTNVLNGTKSSATASGSATSASASGGATTAAAHIQASTSGAMSVLPNLALISAFIATLLF.

The first 21 residues, 1-21 (MQIKTFALSAAIAQVATLALA), serve as a signal peptide directing secretion. N-linked (GlcNAc...) asparagine glycans are attached at residues Asn39, Asn70, Asn87, and Asn106. One can recognise a NodB homology domain in the interval 157–349 (ETWGLTYDDG…YKQVIDVATC (193 aa)). Asp164 (proton acceptor) is an active-site residue. Residue Asp164 participates in acetate binding. Asp165 is a Co(2+) binding site. The N-linked (GlcNAc...) asparagine glycan is linked to Asn168. Co(2+) contacts are provided by His214 and His218. Tyr255 lines the acetate pocket. Asn307 is a glycosylation site (N-linked (GlcNAc...) asparagine). His320 acts as the Proton donor in catalysis. N-linked (GlcNAc...) asparagine glycosylation is found at Asn323, Asn351, and Asn367. Thr390 is lipidated: GPI-anchor amidated threonine. The propeptide at 391–421 (AAAHIQASTSGAMSVLPNLALISAFIATLLF) is removed in mature form.

Belongs to the polysaccharide deacetylase family. The cofactor is Co(2+).

It is found in the secreted. The protein localises to the cell wall. Its subcellular location is the cell membrane. The enzyme catalyses [(1-&gt;4)-N-acetyl-beta-D-glucosaminyl](n) + n H2O = chitosan + n acetate. In terms of biological role, hydrolyzes the N-acetamido groups of N-acetyl-D-glucosamine residues in chitin to form chitosan and acetate. The protein is Chitin deacetylase of Amylomyces rouxii (Filamentous fungus).